The sequence spans 119 residues: MINNTNSNISIKAVGKKIRISPHKMRKVIDQIRGRSYEQALMILEFMPYKACNYVLKLLSSVAANANHNFGLNKSDLFIEKIIADGGPKLKRFQPRAQGRGYPILKPTCNLMIVVKVKS.

The protein belongs to the universal ribosomal protein uL22 family. In terms of assembly, part of the 50S ribosomal subunit.

Its subcellular location is the plastid. It is found in the chloroplast. In terms of biological role, this protein binds specifically to 23S rRNA. Its function is as follows. The globular domain of the protein is located near the polypeptide exit tunnel on the outside of the subunit, while an extended beta-hairpin is found that lines the wall of the exit tunnel in the center of the 70S ribosome. The sequence is that of Large ribosomal subunit protein uL22c (rpl22) from Chaetosphaeridium globosum (Charophycean green alga).